The following is a 390-amino-acid chain: Histamine H4 receptor (390 aa).

At 1–19 (MPDTNSTINLSLSTRVTLA) the chain is on the extracellular side. N-linked (GlcNAc...) asparagine glycosylation is found at asparagine 5 and asparagine 9. The helical transmembrane segment at 20–40 (FFMSLVAFAIMLGNALVILAF) threads the bilayer. Topologically, residues 41–52 (VVDKNLRHRSSY) are cytoplasmic. A helical transmembrane segment spans residues 53–73 (FFLNLAISDFFVGVISIPLYI). Residues 74-87 (PHTLFEWDFGKEIC) are Extracellular-facing. A disulfide bridge connects residues cysteine 87 and cysteine 164. A helical membrane pass occupies residues 88–108 (VFWLTTDYLLCTASVYNIVLI). Residues 109–131 (SYDRYLSVSNAVSYRTQHTGVLK) are Cytoplasmic-facing. A helical membrane pass occupies residues 132 to 152 (IVTLMVAVWVLAFLVNGPMIL). Topologically, residues 153–172 (VSESWKDEGSECEPGFFSEW) are extracellular. Residues 173–193 (YILAITSFLEFVIPVILVAYF) form a helical membrane-spanning segment. At 194-304 (NMNIYWSLWK…LLRARRLAKS (111 aa)) the chain is on the cytoplasmic side. Residues 305–325 (LAILLGVFAVCWAPYSLFTIV) form a helical membrane-spanning segment. Over 326–341 (LSFYSSATGPKSVWYR) the chain is Extracellular. Residues 342–362 (IAFWLQWFNSFVNPLLYPLCH) form a helical membrane-spanning segment. Residues 363–390 (KRFQKAFLKIFCIKKQPLPSQHSRSVSS) are Cytoplasmic-facing.

Belongs to the G-protein coupled receptor 1 family. Interacts with TSPAN4. Expressed primarily in the bone marrow and eosinophils. Shows preferential distribution in cells of immunological relevance such as T-cells, dendritic cells, monocytes, mast cells, neutrophils. Also expressed in a wide variety of peripheral tissues, including the heart, kidney, liver, lung, pancreas, skeletal muscle, prostate, small intestine, spleen, testis, colon, fetal liver and lymph node.

It is found in the cell membrane. The H4 subclass of histamine receptors could mediate the histamine signals in peripheral tissues. Displays a significant level of constitutive activity (spontaneous activity in the absence of agonist). The sequence is that of Histamine H4 receptor (HRH4) from Homo sapiens (Human).